The sequence spans 37 residues: Cytochrome b6-f complex subunit 5 (37 aa).

Residues 5–25 (LLSGIILGLIPITICGLFFTA) form a helical membrane-spanning segment.

Belongs to the PetG family. In terms of assembly, the 4 large subunits of the cytochrome b6-f complex are cytochrome b6, subunit IV (17 kDa polypeptide, PetD), cytochrome f and the Rieske protein, while the 4 small subunits are PetG, PetL, PetM and PetN. The complex functions as a dimer.

It is found in the plastid. Its subcellular location is the chloroplast thylakoid membrane. Component of the cytochrome b6-f complex, which mediates electron transfer between photosystem II (PSII) and photosystem I (PSI), cyclic electron flow around PSI, and state transitions. PetG is required for either the stability or assembly of the cytochrome b6-f complex. The polypeptide is Cytochrome b6-f complex subunit 5 (Euglena gracilis).